We begin with the raw amino-acid sequence, 407 residues long: Glycolate oxidase iron-sulfur subunit (407 aa).

4Fe-4S ferredoxin-type domains are found at residues 14–47 (RALE…ELDG) and 66–95 (LKTQ…HNLL). Cys-25, Cys-28, Cys-31, Cys-35, Cys-75, Cys-78, Cys-81, and Cys-85 together coordinate [4Fe-4S] cluster.

As to quaternary structure, the glycolate oxidase likely consists of three subunits, GlcD, GlcE and GlcF. [4Fe-4S] cluster serves as cofactor.

It localises to the cell inner membrane. It carries out the reaction glycolate + A = glyoxylate + AH2. The catalysed reaction is (R)-lactate + A = pyruvate + AH2. Its activity is regulated as follows. In vitro the glycolate oxidase activity is inhibited by the sulfhydryl inhibitors CuSO4 and PCMB, by KCN, but not by the metal complexing agent EDTA. In terms of biological role, component of a complex that catalyzes the oxidation of glycolate to glyoxylate. Is required for E.coli to grow on glycolate as a sole source of carbon. Is also able to oxidize D-lactate ((R)-lactate) with a similar rate. Does not link directly to O(2), and 2,6-dichloroindophenol (DCIP) and phenazine methosulfate (PMS) can act as artificial electron acceptors in vitro, but the physiological molecule that functions as a primary electron acceptor during glycolate oxidation is unknown. The polypeptide is Glycolate oxidase iron-sulfur subunit (Escherichia coli (strain K12)).